Consider the following 1816-residue polypeptide: Laminin subunit alpha-4 (1816 aa).

Residues 1–24 (MGWSTAWCSVLALWLLWCAVCSNA) form the signal peptide. Residue Ser-39 is glycosylated (O-linked (Xyl...) (chondroitin sulfate) serine). 12 disulfides stabilise this stretch: Cys-82–Cys-91, Cys-84–Cys-98, Cys-101–Cys-110, Cys-113–Cys-129, Cys-132–Cys-146, Cys-134–Cys-155, Cys-157–Cys-166, Cys-169–Cys-184, Cys-187–Cys-202, Cys-189–Cys-209, Cys-212–Cys-221, and Cys-224–Cys-238. Laminin EGF-like domains follow at residues 82–131 (CDCN…FCQP), 132–186 (CPCP…TCKK), and 187–240 (CDCS…NCAV). Asn-104 carries an N-linked (GlcNAc...) asparagine glycan. N-linked (GlcNAc...) asparagine glycosylation is present at Asn-215. Residues 241–255 (CNCGGGPCDSVTGEC) form the Laminin EGF-like 4; truncated domain. The domain II and I stretch occupies residues 256 to 825 (LEEGFEVPTG…AQTRSVASKI (570 aa)). Residues Asn-308, Asn-333, Asn-458, Asn-550, Asn-571, Asn-574, Asn-631, and Asn-639 are each glycosylated (N-linked (GlcNAc...) asparagine). Residues 431 to 523 (THRELVDEEA…ERVKEQMEVV (93 aa)) adopt a coiled-coil conformation. Positions 556–604 (AEIDGAKNELQGKLSNLSNLSHDLVQEATDHAYNLQQEADELSRNLHSS) form a coiled coil. Residues 655–717 (IIYHKDESDN…AVKQLQAAER (63 aa)) adopt a coiled-coil conformation. Residues 717–719 (RGD) carry the Cell attachment site motif. N-linked (GlcNAc...) asparagine glycans are attached at residues Asn-735, Asn-751, Asn-754, Asn-780, and Asn-803. Positions 770 to 799 (AVDSARDAVRNLTEVVPQLLDQLRTVEQKR) form a coiled coil. Laminin G-like domains lie at 826–1030 (QVSM…SVPC), 1042–1222 (AASY…GYGC), and 1229–1397 (SRRA…LYEC). An intrachain disulfide couples Cys-1000 to Cys-1030. N-linked (GlcNAc...) asparagine glycosylation is present at Asn-1088. Residues Cys-1196 and Cys-1222 are joined by a disulfide bond. N-linked (GlcNAc...) asparagine glycans are attached at residues Asn-1283 and Asn-1361. Residues Cys-1365 and Cys-1397 are joined by a disulfide bond. Over residues 1409 to 1419 (KKGKNSSKPKT) the composition is skewed to basic residues. Residues 1409 to 1433 (KKGKNSSKPKTNKQGEKSKDAPSWD) are disordered. Positions 1421 to 1430 (KQGEKSKDAP) are enriched in basic and acidic residues. Laminin G-like domains follow at residues 1462–1633 (AYQY…VTPC) and 1640–1813 (TGTY…INSC). Cystine bridges form between Cys-1610–Cys-1633 and Cys-1785–Cys-1813.

In terms of assembly, laminin is a complex glycoprotein, consisting of three different polypeptide chains (alpha, beta, gamma), which are bound to each other by disulfide bonds into a cross-shaped molecule comprising one long and three short arms with globules at each end. Alpha-4 is a subunit of laminin-8 (laminin-411), laminin-9 (laminin-421) and laminin-14 (laminin-423). Strongly expressed in peripheral nerves, cardiac muscle, fat, dermis, lung stroma, aortic endothelium, endocardium and endothelium of blood vessels in skin and brain.

Its subcellular location is the secreted. The protein localises to the extracellular space. It is found in the extracellular matrix. It localises to the basement membrane. Binding to cells via a high affinity receptor, laminin is thought to mediate the attachment, migration and organization of cells into tissues during embryonic development by interacting with other extracellular matrix components. The sequence is that of Laminin subunit alpha-4 (Lama4) from Mus musculus (Mouse).